A 337-amino-acid polypeptide reads, in one-letter code: Protein XAP5 CIRCADIAN TIMEKEEPER (337 aa).

Ser2 carries the N-acetylserine modification. Coiled coils occupy residues 13–41 (QDAV…KSAS) and 72–121 (TREE…GSSR). Positions 23 to 37 (KQREAERKKIQELKS) are enriched in basic and acidic residues. The segment at 23–47 (KQREAERKKIQELKSKSASGNDQSG) is disordered. Positions 38–47 (KSASGNDQSG) are enriched in polar residues. The segment at 125 to 174 (AEDFENGSDEDDGENKSSGTGNLRCGKLGKDPSVETNFLPDSEREAEEQA) is disordered. The segment covering 126-137 (EDFENGSDEDDG) has biased composition (acidic residues). Position 132 is a phosphoserine (Ser132). The segment covering 165 to 174 (DSEREAEEQA) has biased composition (basic and acidic residues).

Belongs to the FAM50 family. In terms of tissue distribution, expressed in leaves stems, flowers, roots, trichomes and hypocotyls.

It localises to the nucleus. Its function is as follows. Involved in light regulation of the circadian clock and photomorphogenesis. May play a global role in coordinating growth in response to the light environment. Acts as a light quality sensor directing both negative and positive transcriptional regulation. Inhibits growth in red light but promote growth in blue light. Inhibits clock gene expression in diurnal cycles. Plays no role in the control of flowering time. This Arabidopsis thaliana (Mouse-ear cress) protein is Protein XAP5 CIRCADIAN TIMEKEEPER (XCT).